The chain runs to 468 residues: Probable acid phosphatase DIA3 (468 aa).

Positions 1-20 (MVKPVIFAICLGVLLSKALS) are cleaved as a signal peptide. Residue His76 is the Nucleophile of the active site. Asn98, Asn163, Asn193, Asn202, Asn238, Asn251, and Asn316 each carry an N-linked (GlcNAc...) asparagine glycan. Asp339 acts as the Proton donor in catalysis. N-linked (GlcNAc...) asparagine glycosylation is found at Asn357, Asn391, Asn457, and Asn462.

This sequence belongs to the histidine acid phosphatase family.

It carries out the reaction a phosphate monoester + H2O = an alcohol + phosphate. The protein is Probable acid phosphatase DIA3 (DIA3) of Saccharomyces cerevisiae (strain ATCC 204508 / S288c) (Baker's yeast).